Reading from the N-terminus, the 839-residue chain is Lon protease (839 aa).

The Lon N-terminal domain occupies 31–224 (LFLIPIKSRP…KVLLFLKKEI (194 aa)). 377 to 384 (GPPGVGKT) serves as a coordination point for ATP. Residues 613–790 (ASVPGTALGL…EEVALLLFDE (178 aa)) enclose the Lon proteolytic domain. Catalysis depends on residues serine 696 and lysine 739. The disordered stretch occupies residues 807 to 839 (IVNPTRKLSPKKKTTQKQKLSLSKQKGNNQKKK). Low complexity predominate over residues 823–832 (KQKLSLSKQK).

It belongs to the peptidase S16 family. Homohexamer. Organized in a ring with a central cavity.

It localises to the cytoplasm. It catalyses the reaction Hydrolysis of proteins in presence of ATP.. Functionally, ATP-dependent serine protease that mediates the selective degradation of mutant and abnormal proteins as well as certain short-lived regulatory proteins. Required for cellular homeostasis and for survival from DNA damage and developmental changes induced by stress. Degrades polypeptides processively to yield small peptide fragments that are 5 to 10 amino acids long. Binds to DNA in a double-stranded, site-specific manner. This Leptospira interrogans serogroup Icterohaemorrhagiae serovar copenhageni (strain Fiocruz L1-130) protein is Lon protease.